The following is a 300-amino-acid chain: Junctional adhesion molecule A (300 aa).

The N-terminal stretch at 1–26 (MGTEGKAGRKLLFLFTSMILGSLVQG) is a signal peptide. The Extracellular segment spans residues 27-238 (KGSVYTAQSD…MDAVELNVGG (212 aa)). 2 Ig-like V-type domains span residues 28–122 (GSVY…GEVS) and 134–230 (PTIS…AHMD). N-linked (GlcNAc...) asparagine glycosylation occurs at asparagine 42. Disulfide bonds link cysteine 49-cysteine 108 and cysteine 152-cysteine 212. Asparagine 185 is a glycosylation site (N-linked (GlcNAc...) asparagine). A helical transmembrane segment spans residues 239-259 (IVAAVLVTLILLGLLIFGVWF). The Cytoplasmic segment spans residues 260-299 (AYSRGYFERTKKGTAPGKKVIYSQPSTRSEGEFKQTSSFL). A phosphoserine mark is found at serine 282, serine 285, and serine 288.

The protein belongs to the immunoglobulin superfamily. As to quaternary structure, interacts with the ninth PDZ domain of MPDZ. Interacts with the first PDZ domain of PARD3. The association between PARD3 and PARD6B probably disrupts this interaction. Interacts with ITGAL (via I-domain). Interacts with CD151.

The protein localises to the cell junction. It is found in the tight junction. Its subcellular location is the cell membrane. Functionally, seems to play a role in epithelial tight junction formation. Appears early in primordial forms of cell junctions and recruits PARD3. The association of the PARD6-PARD3 complex may prevent the interaction of PARD3 with JAM1, thereby preventing tight junction assembly. Plays a role in regulating monocyte transmigration involved in integrity of epithelial barrier. Ligand for integrin alpha-L/beta-2 involved in memory T-cell and neutrophil transmigration. Involved in platelet activation. The chain is Junctional adhesion molecule A (F11r) from Mus musculus (Mouse).